The sequence spans 89 residues: Small ribosomal subunit protein uS15 (89 aa).

It belongs to the universal ribosomal protein uS15 family. As to quaternary structure, part of the 30S ribosomal subunit. Forms a bridge to the 50S subunit in the 70S ribosome, contacting the 23S rRNA.

One of the primary rRNA binding proteins, it binds directly to 16S rRNA where it helps nucleate assembly of the platform of the 30S subunit by binding and bridging several RNA helices of the 16S rRNA. Its function is as follows. Forms an intersubunit bridge (bridge B4) with the 23S rRNA of the 50S subunit in the ribosome. This is Small ribosomal subunit protein uS15 from Corynebacterium aurimucosum (strain ATCC 700975 / DSM 44827 / CIP 107346 / CN-1) (Corynebacterium nigricans).